The sequence spans 153 residues: Superoxide dismutase [Cu-Zn] (153 aa).

3 residues coordinate Cu cation: H45, H47, and H62. Residues C56 and C145 are joined by a disulfide bond. Zn(2+) is bound by residues H62, H70, H79, and D82. H119 is a Cu cation binding site.

It belongs to the Cu-Zn superoxide dismutase family. Homodimer. Requires Cu cation as cofactor. It depends on Zn(2+) as a cofactor.

The protein resides in the cytoplasm. The enzyme catalyses 2 superoxide + 2 H(+) = H2O2 + O2. In terms of biological role, destroys radicals which are normally produced within the cells and which are toxic to biological systems. This is Superoxide dismutase [Cu-Zn] from Drosophila virilis (Fruit fly).